We begin with the raw amino-acid sequence, 732 residues long: Segment polarity protein dishevelled homolog DVL-2 (732 aa).

One can recognise a DIX domain in the interval 1 to 82; sequence MAETKVIYHL…RVVSWLVSSE (82 aa). 2 disordered regions span residues 81-181 and 195-237; these read SETS…SSST and EEDD…SSFS. Over residues 98 to 111 the composition is skewed to pro residues; that stretch reads DPPPVPPPVPPPPA. The segment covering 146 to 157 has biased composition (basic and acidic residues); sequence MRRDRVRRRDST. Residues 202-213 are compositionally biased toward polar residues; the sequence is RFSSSTEQSSAS. Positions 215-227 are enriched in basic residues; the sequence is LLKRHRRRRKQRP. In terms of domain architecture, PDZ spans 250–335; it reads TVTLNMEKYN…KPGPIILTVA (86 aa). The 75-residue stretch at 424–498 folds into the DEP domain; the sequence is PESGLEVRDR…SEQCYYIFGD (75 aa). Low complexity-rich tracts occupy residues 570 to 589, 612 to 629, and 637 to 647; these read MGSA…SNRS, KSGS…SIRR, and PPSERSTSSRP. The interval 570–660 is disordered; the sequence is MGSAGSQHSE…HPPSVHSYAA (91 aa).

Belongs to the DSH family. As to quaternary structure, can form homomultimers. Interacts with prickle1. Interacts (via the PDZ domain) with ccdc88c/dal and dact1-B/dpr. Interacts (via the DIX domain) with ARP/Axin-related protein and dact1-A/frodo. Interacts with sdc4, possibly via fz7. Interacts directly (via the DEP domain) with efnb1/ephrin-B1. May interact indirectly with the phosphorylated ephrin receptors ephb1 and ephb2 via SH domain-containing adapters. Phosphorylated. Phosphorylation is controlled by frizzled proteins, correlates with the onset of embryo dorsalizing events and is higher in the dorsal half of early cleavage embryos. Phosphorylated on tyrosine residues in response to association with efnb1/ephrin-B1.

It is found in the cytoplasm. The protein localises to the cytoplasmic vesicle. The protein resides in the cell projection. It localises to the cilium. Its subcellular location is the nucleus. It is found in the cell membrane. Its function is as follows. Involved in at least 2 independent signaling cascades, controlling cell fate via canonical Wnt signaling and cell polarity via a planar cell polarity (PCP) cascade. Acts synergistically with dal/dapple-like to activate Wnt signaling, stabilizing ctnnb1/beta-catenin and leading to dorsal axis formation. Also prevents degradation of ctnnb1/beta-catenin by displacing gsk3 from a complex with ARP/Axin-related protein. Has an additional role in anterior-posterior (A/P) axis formation, specifying different neuroectodermal cell fates along the A/P axis in a dose-dependent manner by activating several early patterning genes. In the PCP pathway, required at the cell membrane for PCP-mediated neural and mesodermal convergent extension during gastrulation and subsequent neural tube closure, acting to activate jnk. Also involved in blastopore closure and archenteron elongation during early, but not late, gastrulation. Associates with ephrin receptors and ligands and acts as part of a downstream PCP pathway to mediate ephrin-mediated cell repulsion via activation of rhoa. Required for efnb1/ephrin-B1-driven movement of non-retinal progenitor cells into the retina during eye field formation. Patterns the hindbrain. Required for ciliogenesis. Controls the docking of basal bodies to the apical plasma membrane; mediates the activation, but not localization of rhoa at the apical surface of ciliated cells during basal body docking. Furthermore, required for the association of basal bodies with membrane-bound vesicles and the vesicle-trafficking protein exoc4/sec8, and this association is in turn required for basal body docking. Once basal bodies are docked, required for the planar polarization of basal bodies that underlies ciliary beating and the directional fluid flow across ciliated epithelia. This is Segment polarity protein dishevelled homolog DVL-2 from Xenopus tropicalis (Western clawed frog).